A 138-amino-acid polypeptide reads, in one-letter code: Protein PsiE homolog (138 aa).

4 helical membrane passes run tyrosine 12–isoleucine 34, tyrosine 56–isoleucine 76, histidine 84–isoleucine 104, and alanine 109–alanine 129.

The protein belongs to the PsiE family.

The protein localises to the cell membrane. The protein is Protein PsiE homolog of Bacillus subtilis (strain 168).